The sequence spans 377 residues: MGTQGKVITCKAAIAWKTDSPLCIEEIEVSPPKAHEVRIKVIATCVCPTDINATNPKKKALFPVVLGHECAGIVESVGPGVTNFKPGDKVIPFFAPQCKKCKLCLSPLTNLCGKLRNFKYPTIDQELMEDRTSRFTSKERSIYHFMGVSSFSQYTVVSEANLARVDDEANLERVCLIGCGFTSGYGAAINTAKVTPGSACAVFGLGCVGLSAVIGCKIAGASRIIAIDINSEKFPKAKALGATDCLNPRDLDKPVQDVITELTGGGVDFSLDCAGTAQTLKAAVDCTVVGWGSCTVVGAKVDEMNISTVDMILGRSVKGTFFGGWKSVDSVPNLVTDYKNKKFDLDLLVTHALPFDKINDAIDLMNQGKSIRTILTF.

Cysteine 47 contributes to the Zn(2+) binding site. 48 to 49 (PT) contacts NAD(+). Zn(2+)-binding residues include histidine 68, cysteine 98, cysteine 101, cysteine 104, cysteine 112, and cysteine 179. Residues 204-209 (GLGCVG), aspartate 228, lysine 233, 297-299 (VGA), 320-322 (TFF), and arginine 372 each bind NAD(+).

It belongs to the zinc-containing alcohol dehydrogenase family. Class-II subfamily. Dimer. Zn(2+) is required as a cofactor. As to expression, liver specific.

The protein localises to the cytoplasm. The catalysed reaction is all-trans-retinol + NAD(+) = all-trans-retinal + NADH + H(+). The enzyme catalyses 9-cis-retinol + NAD(+) = 9-cis-retinal + NADH + H(+). It carries out the reaction 20-oxo-(5Z,8Z,11Z,14Z)-eicosatetraenoate + NAD(+) + H2O = (5Z,8Z,11Z,14Z)-eicosatetraenedioate + NADH + 2 H(+). It catalyses the reaction 20-hydroxy-(5Z,8Z,11Z,14Z)-eicosatetraenoate + NAD(+) = 20-oxo-(5Z,8Z,11Z,14Z)-eicosatetraenoate + NADH + H(+). The catalysed reaction is 1,4-benzoquinone + NADH + H(+) = hydroquinone + NAD(+). Oxidation of 20-HETE is inhibited by low concentrations of N-heptylformamide. Oxidation of 20-HETE is a decreased by 55-65% by either all-trans-retinol or all-trans-retinoic acid. Strongly inhibited by omega-hydroxy fatty acids. Its function is as follows. Catalyzes the NAD-dependent oxidation of either all-trans-retinol or 9-cis-retinol. Also oxidizes long chain omega-hydroxy fatty acids, such as 20-HETE, producing both the intermediate aldehyde, 20-oxoarachidonate and the end product, a dicarboxylic acid, (5Z,8Z,11Z,14Z)-eicosatetraenedioate. Also catalyzes the reduction of benzoquinones. This is All-trans-retinol dehydrogenase [NAD(+)] ADH4 from Rattus norvegicus (Rat).